A 170-amino-acid polypeptide reads, in one-letter code: MKYGIAIFPSKTIQDQANALRKRYDPRYSLIPPHLTLKESFEADEETLSETVEELRKIAKETEPFHIQINKVSTFEPVTNTIYFKVEPIQQLNDLHTKLHEGKFDDNQTHPFVPHITIAQDLEHDEFSDILGRLQMEGFNLEDYVDRFQLLYQLDNESWTVYQTFVLGRD.

His34 serves as the catalytic Proton donor. 2 short sequence motifs (HXTX) span residues 34 to 37 (HLTL) and 115 to 118 (HITI). His115 serves as the catalytic Proton acceptor.

The protein belongs to the 2H phosphoesterase superfamily. YjcG family.

The polypeptide is Putative phosphoesterase OB1230 (Oceanobacillus iheyensis (strain DSM 14371 / CIP 107618 / JCM 11309 / KCTC 3954 / HTE831)).